A 249-amino-acid polypeptide reads, in one-letter code: Chitooligosaccharide deacetylase (249 aa).

Positions 61 and 125 each coordinate Mg(2+).

Belongs to the YdjC deacetylase family. ChbG subfamily. Homodimer. It depends on Mg(2+) as a cofactor.

The protein resides in the cytoplasm. It carries out the reaction N,N'-diacetylchitobiose + H2O = N-acetyl-beta-D-glucosaminyl-(1-&gt;4)-D-glucosamine + acetate. It catalyses the reaction diacetylchitobiose-6'-phosphate + H2O = N'-monoacetylchitobiose-6'-phosphate + acetate. It functions in the pathway glycan degradation; chitin degradation. Involved in the degradation of chitin. ChbG is essential for growth on the acetylated chitooligosaccharides chitobiose and chitotriose but is dispensable for growth on cellobiose and chitosan dimer, the deacetylated form of chitobiose. Deacetylation of chitobiose-6-P and chitotriose-6-P is necessary for both the activation of the chb promoter by the regulatory protein ChbR and the hydrolysis of phosphorylated beta-glucosides by the phospho-beta-glucosidase ChbF. Catalyzes the removal of only one acetyl group from chitobiose-6-P to yield monoacetylchitobiose-6-P, the inducer of ChbR and the substrate of ChbF. The chain is Chitooligosaccharide deacetylase from Escherichia coli O7:K1 (strain IAI39 / ExPEC).